A 189-amino-acid chain; its full sequence is Crossover junction endodeoxyribonuclease RuvC (189 aa).

Residues D7, E68, and D141 contribute to the active site. Residues D7, E68, and D141 each coordinate Mg(2+).

The protein belongs to the RuvC family. In terms of assembly, homodimer which binds Holliday junction (HJ) DNA. The HJ becomes 2-fold symmetrical on binding to RuvC with unstacked arms; it has a different conformation from HJ DNA in complex with RuvA. In the full resolvosome a probable DNA-RuvA(4)-RuvB(12)-RuvC(2) complex forms which resolves the HJ. The cofactor is Mg(2+).

Its subcellular location is the cytoplasm. The enzyme catalyses Endonucleolytic cleavage at a junction such as a reciprocal single-stranded crossover between two homologous DNA duplexes (Holliday junction).. In terms of biological role, the RuvA-RuvB-RuvC complex processes Holliday junction (HJ) DNA during genetic recombination and DNA repair. Endonuclease that resolves HJ intermediates. Cleaves cruciform DNA by making single-stranded nicks across the HJ at symmetrical positions within the homologous arms, yielding a 5'-phosphate and a 3'-hydroxyl group; requires a central core of homology in the junction. The consensus cleavage sequence is 5'-(A/T)TT(C/G)-3'. Cleavage occurs on the 3'-side of the TT dinucleotide at the point of strand exchange. HJ branch migration catalyzed by RuvA-RuvB allows RuvC to scan DNA until it finds its consensus sequence, where it cleaves and resolves the cruciform DNA. This Rhodococcus jostii (strain RHA1) protein is Crossover junction endodeoxyribonuclease RuvC.